Reading from the N-terminus, the 87-residue chain is Small ribosomal subunit protein uS17 (87 aa).

It belongs to the universal ribosomal protein uS17 family. As to quaternary structure, part of the 30S ribosomal subunit.

In terms of biological role, one of the primary rRNA binding proteins, it binds specifically to the 5'-end of 16S ribosomal RNA. This Bacillus velezensis (strain DSM 23117 / BGSC 10A6 / LMG 26770 / FZB42) (Bacillus amyloliquefaciens subsp. plantarum) protein is Small ribosomal subunit protein uS17.